The chain runs to 229 residues: Endonuclease NucS (229 aa).

It belongs to the NucS endonuclease family.

The protein resides in the cytoplasm. Functionally, cleaves both 3' and 5' ssDNA extremities of branched DNA structures. The chain is Endonuclease NucS from Corynebacterium diphtheriae (strain ATCC 700971 / NCTC 13129 / Biotype gravis).